A 44-amino-acid chain; its full sequence is MVDETKLNLIEIVLRAYDPUYSCAAHMIVEDAEGNVVFEIVNDE.

The Ni(2+) site is built by U20 and C23. A non-standard amino acid (selenocysteine) is located at residue U20. Positions 27–44 (MIVEDAEGNVVFEIVNDE) are cleaved as a propeptide — removed in mature form.

It belongs to the [NiFe]/[NiFeSe] hydrogenase large subunit family. In terms of assembly, the F420-non-reducing hydrogenase vhu is composed of four subunits; VhuA, VhuD, VhuG and VhuU. The cofactor is Ni(2+).

This chain is F420-non-reducing hydrogenase vhu subunit U (vhuU), found in Methanococcus voltae.